The primary structure comprises 635 residues: MNIKSELNYSNGSNDSDIYNEYGGGSGDETYNKSDTVDFRSKVIPQQSNLPPINNKTDRSHFRESMVASKKTIGAFVISDIAIGKGAFATVFKGLNTLSGDFVAIKRFEKSKISNEQHSSVSTEFDILQRLNHENIVRILGREENENYIYIFLEYMENGSLSTILNNFGTFPESLICNYVENVLKGLVYLHQEGVIHRDIKAANILINKAGEAKLSDFGTAGEIIKESDKRYSVVGTPYWMAPEVIEISGHCQVSDIWSLGCTIIELFTSYPPYFDLNPLGAMYRICQDDRPPLPDDISSELANFLERCFCKSTEERATAKELLSHPWITKNRTNLINHQRNSSKQFTSPQIIINNHQKSLLSNSSGGDDSVTDSDLSISNQSSRSSSFLLDDGGGGGGSKNHTVILTKQQPTPDQIEFNKMQMELQLLRLRVGELETDLKKEQDLKKDSDRKYREILLSSMHYIYIIDSTMNTITNSGGQSIKPQISNDVNHLRSIMRDQIETEYFQTFPDDNMVPRFIQRRFTHVDQANMMIPKKALEAQKRREKEQEKLKEQEKLKEKKKEKDIKKEKDKKDKKDKQLKDSSSSTTTTNSTPSTPDHSAFHSSPITPLSPVRENSKPFLSLKGRSSSKIFNE.

The 253-residue stretch at 77 to 329 (VISDIAIGKG…AKELLSHPWI (253 aa)) folds into the Protein kinase domain. Residues 83-91 (IGKGAFATV) and lysine 106 each bind ATP. Residue aspartate 199 is the Proton acceptor of the active site. Residues 360–392 (SLLSNSSGGDDSVTDSDLSISNQSSRSSSFLLD) show a composition bias toward low complexity. Residues 360 to 405 (SLLSNSSGGDDSVTDSDLSISNQSSRSSSFLLDDGGGGGGSKNHTV) are disordered. 2 coiled-coil regions span residues 417–456 (IEFN…KYRE) and 536–585 (KKAL…KDSS). Basic and acidic residues predominate over residues 540-582 (EAQKRREKEQEKLKEQEKLKEKKKEKDIKKEKDKKDKKDKQLK). Residues 540 to 635 (EAQKRREKEQ…GRSSSKIFNE (96 aa)) are disordered. Positions 583–598 (DSSSSTTTTNSTPSTP) are enriched in low complexity. The span at 626 to 635 (GRSSSKIFNE) shows a compositional bias: polar residues.

Belongs to the protein kinase superfamily. STE Ser/Thr protein kinase family. The cofactor is Mg(2+).

It carries out the reaction L-seryl-[protein] + ATP = O-phospho-L-seryl-[protein] + ADP + H(+). The enzyme catalyses L-threonyl-[protein] + ATP = O-phospho-L-threonyl-[protein] + ADP + H(+). This chain is Probable serine/threonine-protein kinase DDB_G0270146, found in Dictyostelium discoideum (Social amoeba).